Here is a 511-residue protein sequence, read N- to C-terminus: Phospho-2-dehydro-3-deoxyheptonate aldolase 2, chloroplastic (511 aa).

This sequence belongs to the class-II DAHP synthase family. In terms of tissue distribution, leaves, stems, tuber and roots.

It is found in the plastid. It localises to the chloroplast. It carries out the reaction D-erythrose 4-phosphate + phosphoenolpyruvate + H2O = 7-phospho-2-dehydro-3-deoxy-D-arabino-heptonate + phosphate. It participates in metabolic intermediate biosynthesis; chorismate biosynthesis; chorismate from D-erythrose 4-phosphate and phosphoenolpyruvate: step 1/7. In Solanum tuberosum (Potato), this protein is Phospho-2-dehydro-3-deoxyheptonate aldolase 2, chloroplastic (SHKB).